A 323-amino-acid chain; its full sequence is Peroxisome biogenesis protein 20 (323 aa).

C8 participates in a covalent cross-link: Glycyl cysteine thioester (Cys-Gly) (interchain with G-Cter in ubiquitin). K19 participates in a covalent cross-link: Glycyl lysine isopeptide (Lys-Gly) (interchain with G-Cter in ubiquitin). Short sequence motifs (wxxxF/Y motif) lie at residues 89–93, 102–105, and 141–145; these read WSSEF, WVED, and WTQEF.

It belongs to the peroxisomal targeting signal receptor family. Interacts (via WxxxF/Y and LVxEF motifs) with PEX14; promoting translocation through the PEX13-PEX14 docking complex. Interacts with PEX7. Monoubiquitinated at Cys-8 by PEX2 during PEX20 passage through the PEX2-PEX10-PEX12 retrotranslocation channel: monoubiquitination acts as a signal for PEX20 extraction and is required for proper export from peroxisomes and recycling. When PEX5 recycling is compromised, polyubiquitinated at Lys-19 by PEX10 during its passage through the retrotranslocation channel, leading to its degradation.

The protein resides in the cytoplasm. It is found in the cytosol. It localises to the peroxisome matrix. Its function is as follows. Coreceptor required for the peroxisomal import of proteins containing a C-terminal PTS2-type peroxisomal targeting signal, such as 3-oxoacyl-CoA thiolase. Acts via its interaction with PEX7, promoting association between PEX7 bound to cargo proteins and the PEX13-PEX14 docking complex. PEX20 along with PEX7 and PTS2-containing cargo proteins are tranlocated into peroxisomes by passing through the PEX13-PEX14 docking complex. PEX20 coreceptor is then retrotranslocated into the cytosol, leading to release of bound cargo in the peroxisome matrix, and reset for a subsequent peroxisome import cycle. Also mediates peroxisomal import of proteins that do not contain PTS1- or PTS2-type peroxisomal targeting signals, such as acyl-CoA oxidases (Aox) izozymes. Import of acyl-CoA oxidases (Aox) izozymes is independent of PEX7. Required for PEX7 ubiquitination. This chain is Peroxisome biogenesis protein 20, found in Komagataella pastoris (Yeast).